We begin with the raw amino-acid sequence, 239 residues long: Tumor necrosis factor ligand superfamily member 8 (239 aa).

Positions methionine 1 to proline 36 are disordered. Residues methionine 1 to serine 43 are Cytoplasmic-facing. The chain crosses the membrane as a helical; Signal-anchor for type II membrane protein span at residues tyrosine 44–valine 67. Residues glutamine 68–aspartate 239 are Extracellular-facing. Residues asparagine 75, asparagine 86, asparagine 114, asparagine 158, asparagine 194, and asparagine 206 are each glycosylated (N-linked (GlcNAc...) asparagine). The 128-residue stretch at serine 103–leucine 230 folds into the THD domain. The cysteines at positions 156 and 182 are disulfide-linked.

It belongs to the tumor necrosis factor family. Homotrimer.

Its subcellular location is the membrane. Functionally, cytokine that binds to TNFRSF8/CD30. Induces proliferation of T-cells. This is Tumor necrosis factor ligand superfamily member 8 (Tnfsf8) from Mus musculus (Mouse).